The sequence spans 279 residues: uncharacterized protein (279 aa).

3 consecutive transmembrane segments (helical) span residues 1–21, 38–58, and 131–151; these read MGFI…LCGI, FACH…SVVA, and SLRY…VFID.

Belongs to the 1-acyl-sn-glycerol-3-phosphate acyltransferase family.

The protein localises to the endoplasmic reticulum membrane. This is an uncharacterized protein from Schizosaccharomyces pombe (strain 972 / ATCC 24843) (Fission yeast).